Here is a 75-residue protein sequence, read N- to C-terminus: uncharacterized protein (75 aa).

A helical membrane pass occupies residues I44 to L64.

The protein resides in the host membrane. This is an uncharacterized protein from Ostreid herpesvirus 1 (isolate France) (OsHV-1).